Consider the following 287-residue polypeptide: UPF0098 protein AF_1698 (287 aa).

It belongs to the UPF0098 family.

This chain is UPF0098 protein AF_1698, found in Archaeoglobus fulgidus (strain ATCC 49558 / DSM 4304 / JCM 9628 / NBRC 100126 / VC-16).